The sequence spans 257 residues: NAD kinase (257 aa).

Catalysis depends on Asp-46, which acts as the Proton acceptor. Residues Asp-46–Gly-47, His-51, Asn-116–Glu-117, Asp-146, Ala-154, Thr-157–Ser-162, and Gln-218 contribute to the NAD(+) site.

It belongs to the NAD kinase family. A divalent metal cation serves as cofactor.

Its subcellular location is the cytoplasm. The catalysed reaction is NAD(+) + ATP = ADP + NADP(+) + H(+). Functionally, involved in the regulation of the intracellular balance of NAD and NADP, and is a key enzyme in the biosynthesis of NADP. Catalyzes specifically the phosphorylation on 2'-hydroxyl of the adenosine moiety of NAD to yield NADP. The protein is NAD kinase of Rhizobium meliloti (strain 1021) (Ensifer meliloti).